The sequence spans 196 residues: Potassium-transporting ATPase KdpC subunit (196 aa).

A helical membrane pass occupies residues 17–37 (LLLLVATAGLGLVYPLAVFAV). Residues 73–93 (QPRPSAAGDGYDPTASGASNL) form a disordered region.

This sequence belongs to the KdpC family. In terms of assembly, the system is composed of three essential subunits: KdpA, KdpB and KdpC.

The protein resides in the cell membrane. Functionally, part of the high-affinity ATP-driven potassium transport (or Kdp) system, which catalyzes the hydrolysis of ATP coupled with the electrogenic transport of potassium into the cytoplasm. This subunit acts as a catalytic chaperone that increases the ATP-binding affinity of the ATP-hydrolyzing subunit KdpB by the formation of a transient KdpB/KdpC/ATP ternary complex. The sequence is that of Potassium-transporting ATPase KdpC subunit from Kineococcus radiotolerans (strain ATCC BAA-149 / DSM 14245 / SRS30216).